We begin with the raw amino-acid sequence, 42 residues long: Gastric inhibitory polypeptide (42 aa).

The protein belongs to the glucagon family.

The protein localises to the secreted. Functionally, potent stimulator of insulin secretion and relatively poor inhibitor of gastric acid secretion. The protein is Gastric inhibitory polypeptide (GIP) of Sus scrofa (Pig).